Here is a 142-residue protein sequence, read N- to C-terminus: Nucleoside diphosphate kinase (142 aa).

Residues lysine 11, phenylalanine 59, arginine 87, threonine 93, arginine 104, and asparagine 114 each contribute to the ATP site. Catalysis depends on histidine 117, which acts as the Pros-phosphohistidine intermediate.

This sequence belongs to the NDK family. In terms of assembly, homotetramer. The cofactor is Mg(2+).

It localises to the cytoplasm. It catalyses the reaction a 2'-deoxyribonucleoside 5'-diphosphate + ATP = a 2'-deoxyribonucleoside 5'-triphosphate + ADP. The catalysed reaction is a ribonucleoside 5'-diphosphate + ATP = a ribonucleoside 5'-triphosphate + ADP. Its function is as follows. Major role in the synthesis of nucleoside triphosphates other than ATP. The ATP gamma phosphate is transferred to the NDP beta phosphate via a ping-pong mechanism, using a phosphorylated active-site intermediate. The polypeptide is Nucleoside diphosphate kinase (Aeromonas salmonicida (strain A449)).